We begin with the raw amino-acid sequence, 92 residues long: Progonadoliberin-1 (92 aa).

The first 23 residues, 1–23 (MELVPKFLAGLILLTLCVGGCYA), serve as a signal peptide directing secretion. Q24 is modified (pyrrolidone carboxylic acid). Position 33 is a glycine amide (G33).

The protein belongs to the GnRH family.

The protein localises to the secreted. In terms of biological role, stimulates the secretion of gonadotropins; it stimulates the secretion of both luteinizing and follicle-stimulating hormones. The chain is Progonadoliberin-1 (GNRH1) from Tupaia belangeri (Common tree shrew).